The chain runs to 203 residues: Urease accessory protein UreG (203 aa).

Glycine 10–threonine 17 is a binding site for GTP.

Belongs to the SIMIBI class G3E GTPase family. UreG subfamily. As to quaternary structure, homodimer. UreD, UreF and UreG form a complex that acts as a GTP-hydrolysis-dependent molecular chaperone, activating the urease apoprotein by helping to assemble the nickel containing metallocenter of UreC. The UreE protein probably delivers the nickel.

The protein localises to the cytoplasm. Facilitates the functional incorporation of the urease nickel metallocenter. This process requires GTP hydrolysis, probably effectuated by UreG. This Lachnoclostridium phytofermentans (strain ATCC 700394 / DSM 18823 / ISDg) (Clostridium phytofermentans) protein is Urease accessory protein UreG.